A 422-amino-acid chain; its full sequence is Glutamyl-tRNA reductase (422 aa).

Substrate is bound by residues 49-52 (TCNR), Ser-107, 112-114 (EPQ), and Gln-118. Cys-50 (nucleophile) is an active-site residue. Position 187–192 (187–192 (GAGETI)) interacts with NADP(+).

It belongs to the glutamyl-tRNA reductase family. As to quaternary structure, homodimer.

It carries out the reaction (S)-4-amino-5-oxopentanoate + tRNA(Glu) + NADP(+) = L-glutamyl-tRNA(Glu) + NADPH + H(+). Its pathway is porphyrin-containing compound metabolism; protoporphyrin-IX biosynthesis; 5-aminolevulinate from L-glutamyl-tRNA(Glu): step 1/2. In terms of biological role, catalyzes the NADPH-dependent reduction of glutamyl-tRNA(Glu) to glutamate 1-semialdehyde (GSA). The polypeptide is Glutamyl-tRNA reductase (Pseudomonas aeruginosa (strain ATCC 15692 / DSM 22644 / CIP 104116 / JCM 14847 / LMG 12228 / 1C / PRS 101 / PAO1)).